A 307-amino-acid chain; its full sequence is Recombination-associated protein RdgC (307 aa).

It belongs to the RdgC family.

It is found in the cytoplasm. The protein resides in the nucleoid. In terms of biological role, may be involved in recombination. This is Recombination-associated protein RdgC from Burkholderia orbicola (strain MC0-3).